The sequence spans 443 residues: Minovincinine 19-hydroxy-O-acetyltransferase (443 aa).

The active-site Proton acceptor is histidine 157. Residues 215–222 (RKRFLFSP) carry the Nuclear localization signal motif. The stretch at 316 to 343 (TKLVIGELRKAKDKLKNLSQEKLNYVAR) forms a coiled coil. Residue aspartate 384 is the Proton acceptor of the active site.

The protein belongs to the plant acyltransferase family. As to quaternary structure, monomer. As to expression, expressed in cortical cells of the root tip, especially in hairy roots, as well as in etiolated seedlings. Mostly expressed in roots, and, at lower levels, in leaves.

The protein localises to the cytoplasm. Its subcellular location is the nucleus. The enzyme catalyses (+)-minovincinine + acetyl-CoA = (+)-echitovenine + CoA. It participates in alkaloid biosynthesis. In terms of biological role, component of the monoterpenoid indole alkaloids (MIAs, e.g. echitovenine, tabersonine, lochnericine, 19-hydroxytabersonine and horhammericine) biosynthetic pathway; MIAs are used in cancer treatment and other medical applications. Acyltransferase catalyzing the conversion of (+)-minovincinine to (+)-echitovenine. The chain is Minovincinine 19-hydroxy-O-acetyltransferase from Catharanthus roseus (Madagascar periwinkle).